Reading from the N-terminus, the 800-residue chain is DNA topoisomerase 4 subunit A (800 aa).

Positions 31-495 (LPDVRDGLKP…EIEEIKIDKE (465 aa)) constitute a Topo IIA-type catalytic domain. Tyr-119 functions as the O-(5'-phospho-DNA)-tyrosine intermediate in the catalytic mechanism.

Belongs to the type II topoisomerase GyrA/ParC subunit family. ParC type 2 subfamily. Heterotetramer composed of ParC and ParE.

It localises to the cell membrane. The enzyme catalyses ATP-dependent breakage, passage and rejoining of double-stranded DNA.. Its function is as follows. Topoisomerase IV is essential for chromosome segregation. It relaxes supercoiled DNA. Performs the decatenation events required during the replication of a circular DNA molecule. In Staphylococcus aureus (strain MSSA476), this protein is DNA topoisomerase 4 subunit A.